A 313-amino-acid polypeptide reads, in one-letter code: Ketimine reductase mu-crystallin (313 aa).

Arg47 is a binding site for 3,3',5-triiodo-L-thyronine. Residues Ser90, His91, Arg118, Ala143, Val145, Gln146, Asn167, Arg168, Thr169, Asn172, Thr204, Met205, and Val225 each coordinate NADPH. 3,3',5-triiodo-L-thyronine is bound at residue Glu256. Residue Ser291 coordinates NADPH.

The protein belongs to the ornithine cyclodeaminase/mu-crystallin family. Homodimer. Binds the thyroid hormone triiodothyronine (T3); T3 binding inhibits enzymatic activity. In terms of tissue distribution, expressed in the spiral ligament of the cochlea (at protein level).

The protein localises to the cytoplasm. The catalysed reaction is L-pipecolate + NADP(+) = Delta(1)-piperideine-2-carboxylate + NADPH + H(+). It catalyses the reaction L-pipecolate + NAD(+) = Delta(1)-piperideine-2-carboxylate + NADH + H(+). It carries out the reaction L-proline + NADP(+) = 1-pyrroline-2-carboxylate + NADPH + H(+). The enzyme catalyses L-proline + NAD(+) = 1-pyrroline-2-carboxylate + NADH + H(+). The catalysed reaction is (3R)-1,4-thiomorpholine-3-carboxylate + NAD(+) = 3,4-dehydrothiomorpholine-3-carboxylate + NADH + 2 H(+). It catalyses the reaction (3R)-1,4-thiomorpholine-3-carboxylate + NADP(+) = 3,4-dehydrothiomorpholine-3-carboxylate + NADPH + 2 H(+). It carries out the reaction (S)-cystathionine ketimine + NADH + 2 H(+) = (3R,5S)-2,3,5,6,7-pentahydro-1,4-thiazepine-3,5-dicarboxylate + NAD(+). The enzyme catalyses (S)-cystathionine ketimine + NADPH + 2 H(+) = (3R,5S)-2,3,5,6,7-pentahydro-1,4-thiazepine-3,5-dicarboxylate + NADP(+). The catalysed reaction is (R)-lanthionine ketimine + NADPH + 2 H(+) = (3R,5R)-1,4-thiomorpholine-3,5-dicarboxylate + NADP(+). It catalyses the reaction Delta(2)-thiazoline-2-carboxylate + NADPH + 2 H(+) = L-thiazolidine-2-carboxylate + NADP(+). Catalyzes the NAD(P)H-dependent reduction of imine double bonds of a number of cyclic ketimine substrates, including sulfur-containing cyclic ketimines. Under physiological conditions, it efficiently catalyzes delta(1)-piperideine-2-carboxylate (P2C) and delta(1)-pyrroline-2-carboxylate (Pyr2C) reduction, suggesting a central role in lysine and glutamate metabolism. Additional substrates are delta(2)-thiazoline-2-carboxylate (T2C), 3,4-dehydrothiomorpholine-3-carboxylate (AECK), and (R)-lanthionine ketimine (LK) that is reduced at very low rate compared to other substrates. Also catalyzes the NAD(P)H-dependent reduction of (S)-cystathionine ketimine (CysK). This chain is Ketimine reductase mu-crystallin, found in Mus musculus (Mouse).